A 257-amino-acid chain; its full sequence is Tryptophan synthase alpha chain (257 aa).

Active-site proton acceptor residues include Glu-47 and Asp-58.

It belongs to the TrpA family. In terms of assembly, tetramer of two alpha and two beta chains.

It carries out the reaction (1S,2R)-1-C-(indol-3-yl)glycerol 3-phosphate + L-serine = D-glyceraldehyde 3-phosphate + L-tryptophan + H2O. Its pathway is amino-acid biosynthesis; L-tryptophan biosynthesis; L-tryptophan from chorismate: step 5/5. Its function is as follows. The alpha subunit is responsible for the aldol cleavage of indoleglycerol phosphate to indole and glyceraldehyde 3-phosphate. The protein is Tryptophan synthase alpha chain of Listeria monocytogenes serotype 4b (strain F2365).